The primary structure comprises 105 residues: Protein U4 (105 aa).

A helical membrane pass occupies residues 5-25 (FLLFLLLLVLVINPSLVVNMV).

It belongs to the nanovirus U4 protein family.

The protein localises to the membrane. The polypeptide is Protein U4 (DNA-U4) (Faba bean necrotic yellows virus (isolate Egyptian EV1-93) (FBNYV)).